We begin with the raw amino-acid sequence, 240 residues long: Ribosomal RNA large subunit methyltransferase E (240 aa).

Residues 1 to 20 show a composition bias toward gly residues; it reads MSKAGGNKGGVKTGGRGGAG. A disordered region spans residues 1–27; that stretch reads MSKAGGNKGGVKTGGRGGAGSSNLQVR. G92, W94, D115, D131, and D155 together coordinate S-adenosyl-L-methionine. K195 acts as the Proton acceptor in catalysis.

This sequence belongs to the class I-like SAM-binding methyltransferase superfamily. RNA methyltransferase RlmE family.

Its subcellular location is the cytoplasm. It catalyses the reaction uridine(2552) in 23S rRNA + S-adenosyl-L-methionine = 2'-O-methyluridine(2552) in 23S rRNA + S-adenosyl-L-homocysteine + H(+). In terms of biological role, specifically methylates the uridine in position 2552 of 23S rRNA at the 2'-O position of the ribose in the fully assembled 50S ribosomal subunit. The polypeptide is Ribosomal RNA large subunit methyltransferase E (Brucella anthropi (strain ATCC 49188 / DSM 6882 / CCUG 24695 / JCM 21032 / LMG 3331 / NBRC 15819 / NCTC 12168 / Alc 37) (Ochrobactrum anthropi)).